The primary structure comprises 652 residues: MNKRMNELVALLNRYATEYYTSDNPSVSDSEYDRLYRELVELETAYPEQVLADSPTHRVGGKVLDGFEKYSHQYPLYSLQDAFSREELDAFDARVRKEVAHPTYICELKIDGLSISLTYEKGILVAGVTRGDGSIGENITENLKRVKDIPLTLPEELDITVRGECYMPRASFDQVNQARQENGEPEFANPRNAAAGTLRQLDTAVVAKRNLATFLYQEASPSTRDSQEKGLKYLEQLGFVVNPKRILAENIDEIWNFIQEVGQERENLPYDIDGVVIKVNDLASQEELGFTVKAPKWAVAYKFPAEEKEAQLLSVDWTVGRTGVVTPTANLTPVQLAGTTVSRATLHNVDYIAEKDIRKDDTVIVYKAGDIIPAVLRVVESKRVSEEKLDIPTNCPSCNSDLLHFEDEVALRCINPRCPAQIMEGLIHFASRDAMNITGLGPSIVEKLFAANLVKDVADIYRLQEEDFLLLEGVKEKSAAKLYQAIQASKENSAEKLLFGLGIRHVGSKASQLLLQYFHSIENLYQADSEEVASIESLGGVIAKSLQTYFATEGSEILLRELKETGVNLDYKGQTVVADAALSGLTVVLTGKLERLKRSEAKSKLESLGAKVTGSVSKKTDLVVVGADAGSKLQKAQELGIQVRDEAWLESL.

NAD(+) contacts are provided by residues 29 to 33 (DSEYD), 78 to 79 (SL), and Glu107. Residue Lys109 is the N6-AMP-lysine intermediate of the active site. Arg130, Glu164, Lys278, and Lys302 together coordinate NAD(+). Zn(2+)-binding residues include Cys395, Cys398, Cys413, and Cys418. The region spanning 577–652 (VADAALSGLT…VRDEAWLESL (76 aa)) is the BRCT domain.

Belongs to the NAD-dependent DNA ligase family. LigA subfamily. Requires Mg(2+) as cofactor. Mn(2+) is required as a cofactor.

The enzyme catalyses NAD(+) + (deoxyribonucleotide)n-3'-hydroxyl + 5'-phospho-(deoxyribonucleotide)m = (deoxyribonucleotide)n+m + AMP + beta-nicotinamide D-nucleotide.. Its function is as follows. DNA ligase that catalyzes the formation of phosphodiester linkages between 5'-phosphoryl and 3'-hydroxyl groups in double-stranded DNA using NAD as a coenzyme and as the energy source for the reaction. It is essential for DNA replication and repair of damaged DNA. The polypeptide is DNA ligase (Streptococcus pneumoniae (strain P1031)).